Consider the following 78-residue polypeptide: Myrmicitoxin-Ta2a (78 aa).

The signal sequence occupies residues 1-26; the sequence is MKLSFLSLALAIIFVTVLIYAPQAEA. A propeptide spanning residues 27-56 is cleaved from the precursor; the sequence is KALADAVADADADADAAADAVADALADADA. Lys-77 is modified (lysine amide).

The protein belongs to the formicidae venom precursor-01 superfamily. In terms of tissue distribution, expressed by the venom gland.

The protein localises to the secreted. In terms of biological role, peptide with toxicity towards insects that may also act as antimicrobial peptide. Causes calcium influx in F11 cells (EC(50)=5.8 nM), possibly by modulating sodium channels (Nav). In vivo, is lethal to insects, but does not show toxicity to vertebrates. Intraplantar injection into mice does not induce spontaneous nocifensive behaviors up to a dose of 200 pmol. This Tetramorium africanum (Fierce ant) protein is Myrmicitoxin-Ta2a.